We begin with the raw amino-acid sequence, 173 residues long: DELTA-actitoxin-Oor1b (173 aa).

The N-terminal region stretch occupies residues 6 to 25 (GAALGFNVHQTVLKALGQVS). Residues serine 49, valine 82, serine 100, proline 102, tyrosine 128, and tyrosine 133 each contribute to the phosphocholine site. The interval 100–115 (SVPFDYNLYSNWWDVK) is trp-rich region, which is important for the binding to lipid membrane.

The protein belongs to the actinoporin family. Sea anemone subfamily. As to quaternary structure, octamer or nonamer in membranes. Monomer in the soluble state.

The protein resides in the secreted. The protein localises to the nematocyst. Its subcellular location is the target cell membrane. Pore-forming protein that forms cations-selective hydrophilic pores of around 1 nm and causes cardiac stimulation and cytolysis. Pore formation is a multi-step process that involves specific recognition of membrane sphingomyelin (but neither cholesterol nor phosphatidylcholine) using aromatic rich region and adjacent phosphocholine (POC) binding site, firm binding to the membrane (mainly driven by hydrophobic interactions) accompanied by the transfer of the N-terminal region to the lipid-water interface and finally pore formation after oligomerization of monomers. Cytolytic effects include red blood cells hemolysis, platelet aggregation and lysis, cytotoxic and cytostatic effects on fibroblasts. Lethality in mammals has been ascribed to severe vasospasm of coronary vessels, cardiac arrhythmia, and inotropic effects. The chain is DELTA-actitoxin-Oor1b from Oulactis orientalis (Japan anemone).